Consider the following 638-residue polypeptide: tRNA uridine 5-carboxymethylaminomethyl modification enzyme MnmG (638 aa).

Residues 13 to 18, Val-125, and Ser-180 contribute to the FAD site; that span reads GGGHAG. 273 to 287 serves as a coordination point for NAD(+); it reads GPRYCPSIEDKIHRF. An FAD-binding site is contributed by Gln-370.

This sequence belongs to the MnmG family. In terms of assembly, homodimer. Heterotetramer of two MnmE and two MnmG subunits. FAD serves as cofactor.

It localises to the cytoplasm. In terms of biological role, NAD-binding protein involved in the addition of a carboxymethylaminomethyl (cmnm) group at the wobble position (U34) of certain tRNAs, forming tRNA-cmnm(5)s(2)U34. The chain is tRNA uridine 5-carboxymethylaminomethyl modification enzyme MnmG from Cellvibrio japonicus (strain Ueda107) (Pseudomonas fluorescens subsp. cellulosa).